Consider the following 476-residue polypeptide: Ribosomal protein uS12 methylthiotransferase RimO (476 aa).

An MTTase N-terminal domain is found at 33–143; the sequence is NRIGFVSLGC…VLKHVHKYVP (111 aa). Residues C42, C78, C107, C175, C179, and C182 each contribute to the [4Fe-4S] cluster site. A Radical SAM core domain is found at 161 to 398; that stretch reads LTPKHYAYLK…MEVQAEISAE (238 aa). Residues 401–467 enclose the TRAM domain; sequence ARFVGRTMDI…EHDLWAELVD (67 aa).

It belongs to the methylthiotransferase family. RimO subfamily. [4Fe-4S] cluster is required as a cofactor.

It is found in the cytoplasm. It carries out the reaction L-aspartate(89)-[ribosomal protein uS12]-hydrogen + (sulfur carrier)-SH + AH2 + 2 S-adenosyl-L-methionine = 3-methylsulfanyl-L-aspartate(89)-[ribosomal protein uS12]-hydrogen + (sulfur carrier)-H + 5'-deoxyadenosine + L-methionine + A + S-adenosyl-L-homocysteine + 2 H(+). In terms of biological role, catalyzes the methylthiolation of an aspartic acid residue of ribosomal protein uS12. This chain is Ribosomal protein uS12 methylthiotransferase RimO, found in Shewanella sp. (strain MR-4).